Reading from the N-terminus, the 545-residue chain is CTP synthase (545 aa).

Residues 1-266 are amidoligase domain; sequence MATNYIFVTG…DTFVCDRFRL (266 aa). Serine 14 is a CTP binding site. Serine 14 is a binding site for UTP. ATP-binding positions include 15–20 and aspartate 72; that span reads SLGKGI. Mg(2+) is bound by residues aspartate 72 and glutamate 140. CTP contacts are provided by residues 147–149, 187–192, and lysine 223; these read DIE and KTKPTQ. Residues 187-192 and lysine 223 each bind UTP; that span reads KTKPTQ. Residue 239-241 coordinates ATP; that stretch reads KDV. Residues 291 to 542 form the Glutamine amidotransferase type-1 domain; the sequence is TIGMVGKYVE…VAAAKAYQDS (252 aa). L-glutamine is bound at residue glycine 352. The active-site Nucleophile; for glutamine hydrolysis is cysteine 379. L-glutamine-binding positions include 380 to 383, glutamate 403, and arginine 470; that span reads LGMQ. Active-site residues include histidine 515 and glutamate 517.

It belongs to the CTP synthase family. As to quaternary structure, homotetramer.

The catalysed reaction is UTP + L-glutamine + ATP + H2O = CTP + L-glutamate + ADP + phosphate + 2 H(+). It carries out the reaction L-glutamine + H2O = L-glutamate + NH4(+). It catalyses the reaction UTP + NH4(+) + ATP = CTP + ADP + phosphate + 2 H(+). Its pathway is pyrimidine metabolism; CTP biosynthesis via de novo pathway; CTP from UDP: step 2/2. Its activity is regulated as follows. Allosterically activated by GTP, when glutamine is the substrate; GTP has no effect on the reaction when ammonia is the substrate. The allosteric effector GTP functions by stabilizing the protein conformation that binds the tetrahedral intermediate(s) formed during glutamine hydrolysis. Inhibited by the product CTP, via allosteric rather than competitive inhibition. In terms of biological role, catalyzes the ATP-dependent amination of UTP to CTP with either L-glutamine or ammonia as the source of nitrogen. Regulates intracellular CTP levels through interactions with the four ribonucleotide triphosphates. The protein is CTP synthase of Actinobacillus pleuropneumoniae serotype 5b (strain L20).